The sequence spans 123 residues: Guanine nucleotide exchange factor MSS4 (123 aa).

Met-1 bears the N-acetylmethionine mark. Residues 9-123 (ELVSAEGRNR…YVALERVSHE (115 aa)) form the MSS4 domain. Zn(2+) is bound by residues Cys-23, Cys-26, Cys-94, and Cys-97.

It belongs to the DSS4/MSS4 family. In terms of assembly, interacts with RAB8A. Ubiquitous.

Functionally, guanine-nucleotide-releasing protein that acts on members of the SEC4/YPT1/RAB subfamily. Stimulates GDP release from both YPT1, RAB3A and RAB10, but is less active on these proteins than on the SEC4 protein. Might play a general role in vesicular transport. This is Guanine nucleotide exchange factor MSS4 (Rabif) from Rattus norvegicus (Rat).